A 749-amino-acid chain; its full sequence is Cytosolic phospholipase A2 (749 aa).

The interval 1-178 (MSFIDPYQHI…MKKLLGPKNS (178 aa)) is phospholipid binding. S2 bears the Phosphoserine mark. One can recognise a C2 domain in the interval 6 to 122 (PYQHIIVEHH…KVGEKKQVPF (117 aa)). Residues D40, T41, D43, N65, D93, A94, and N95 each coordinate Ca(2+). Residues 140-740 (SSPDLRFSMA…SSVEARRFFN (601 aa)) form the PLA2c domain. S228 serves as the catalytic Nucleophile. T268 carries the post-translational modification Phosphothreonine. The interval 426–458 (AKHIVSNDSSDSDDESQGPKGTEHEEAEREYQN) is disordered. Residues S434, S435, and S437 each carry the phosphoserine modification. The segment covering 446 to 457 (GTEHEEAEREYQ) has biased composition (basic and acidic residues). S505 bears the Phosphoserine; by MAPK mark. S515 bears the Phosphoserine mark. Residue K541 forms a Glycyl lysine isopeptide (Lys-Gly) (interchain with G-Cter in SUMO2) linkage. D549 serves as the catalytic Proton acceptor. K606 participates in a covalent cross-link: Glycyl lysine isopeptide (Lys-Gly) (interchain with G-Cter in SUMO2). Residues S727 and S729 each carry the phosphoserine modification.

In terms of assembly, interacts with KAT5. In terms of processing, phosphorylated at both Ser-505 and Ser-727 in response to mitogenic stimuli. In terms of tissue distribution, detected in granulosa cells after stimulation with chorionic gonadotropin (at protein level).

It is found in the cytoplasm. The protein localises to the golgi apparatus membrane. It localises to the nucleus envelope. It carries out the reaction a 1,2-diacyl-sn-glycero-3-phosphocholine + H2O = a 1-acyl-sn-glycero-3-phosphocholine + a fatty acid + H(+). It catalyses the reaction a 1-O-alkyl-2-acyl-sn-glycero-3-phosphocholine + H2O = a 1-O-alkyl-sn-glycero-3-phosphocholine + a fatty acid + H(+). The enzyme catalyses a 1-acyl-sn-glycero-3-phosphocholine + H2O = sn-glycerol 3-phosphocholine + a fatty acid + H(+). The catalysed reaction is 1-hexadecanoyl-2-(5Z,8Z,11Z,14Z-eicosatetraenoyl)-sn-glycero-3-phosphocholine + H2O = 1-hexadecanoyl-sn-glycero-3-phosphocholine + (5Z,8Z,11Z,14Z)-eicosatetraenoate + H(+). It carries out the reaction 1,2-di-(5Z,8Z,11Z,14Z-eicosatetraenoyl)-sn-glycero-3-phosphocholine + H2O = 1-(5Z,8Z,11Z,14Z-eicosatetraenoyl)-sn-glycero-3-phosphocholine + (5Z,8Z,11Z,14Z)-eicosatetraenoate + H(+). It catalyses the reaction 1-octadecanoyl-2-(5Z,8Z,11Z,14Z-eicosatetraenoyl)-sn-glycero-3-phosphocholine + H2O = 1-octadecanoyl-sn-glycero-3-phosphocholine + (5Z,8Z,11Z,14Z)-eicosatetraenoate + H(+). The enzyme catalyses 1-hexadecanoyl-2-(9Z,12Z-octadecadienoyl)-sn-glycero-3-phosphocholine + H2O = (9Z,12Z)-octadecadienoate + 1-hexadecanoyl-sn-glycero-3-phosphocholine + H(+). The catalysed reaction is 1-octadecanoyl-2-(9Z,12Z,15Z-octadecatrienoyl)-sn-glycero-3-phosphocholine + H2O = (9Z,12Z,15Z)-octadecatrienoate + 1-octadecanoyl-sn-glycero-3-phosphocholine + H(+). It carries out the reaction 1-(5Z,8Z,11Z,14Z-eicosatetraenoyl)-2-hexadecanoyl-sn-glycero-3-phosphocholine + H2O = 1-(5Z,8Z,11Z,14Z-eicosatetraenoyl)-sn-glycero-3-phosphocholine + hexadecanoate + H(+). It catalyses the reaction 1-O-hexadecyl-2-(5Z,8Z,11Z,14Z)-eicosatetraenoyl-sn-glycero-3-phosphocholine + H2O = 1-O-hexadecyl-sn-glycero-3-phosphocholine + (5Z,8Z,11Z,14Z)-eicosatetraenoate + H(+). The enzyme catalyses 1,2-di-(9Z-octadecenoyl)-sn-glycero-3-phospho-(1'-sn-glycerol) + H2O = 1-(9Z-octadecenoyl)-sn-glycero-3-phospho-(1'-sn-glycerol) + (9Z)-octadecenoate + H(+). The catalysed reaction is 1-octadecanoyl-2-(5Z,8Z,11Z,14Z-eicosatetraenoyl)-sn-glycero-3-phosphate + H2O = 1-octadecanoyl-sn-glycero-3-phosphate + (5Z,8Z,11Z,14Z)-eicosatetraenoate + H(+). It carries out the reaction 1-hexadecanoyl-sn-glycero-3-phosphocholine + H2O = sn-glycerol 3-phosphocholine + hexadecanoate + H(+). It catalyses the reaction 2-(prostaglandin E2)-sn-glycero-3-phosphoethanolamine + H2O = sn-glycero-3-phosphoethanolamine + prostaglandin E2 + H(+). The enzyme catalyses 2-[(15S)-hydroxy-(5Z,8Z,11Z,13E)-eicosatetraenoyl]-sn-glycero-3-phosphocholine + H2O = (15S)-hydroxy-(5Z,8Z,11Z,13E)-eicosatetraenoate + sn-glycerol 3-phosphocholine + H(+). The catalysed reaction is 2-[(15R)-hydroxy-(5Z,8Z,11Z,13E)-eicosatetraenoyl]-sn-glycero-3-phosphocholine + H2O = (15R)-hydroxy-(5Z,8Z,11Z,13E)-eicosatetraenoate + sn-glycerol 3-phosphocholine + H(+). It carries out the reaction 2-(prostaglandin E2)-sn-glycero-3-phosphocholine + H2O = prostaglandin E2 + sn-glycerol 3-phosphocholine + H(+). It catalyses the reaction 2-[(11R)-hydroxy-(5Z,8Z,12E,14Z)-eicosatetraenoyl]-sn-glycero-3-phosphocholine + H2O = (11R)-hydroxy-(5Z,8Z,12E,14Z)-eicosatetraenoate + sn-glycerol 3-phosphocholine + H(+). The enzyme catalyses 1-(5Z,8Z,11Z,14Z-eicosatetraenoyl)-2-O-hexadecyl-sn-glycero-3-phosphocholine + H2O = 2-O-hexadecyl-sn-glycero-3-phosphocholine + (5Z,8Z,11Z,14Z)-eicosatetraenoate + H(+). The catalysed reaction is 1-octadecanoyl-2-(5Z,8Z,11Z,14Z-eicosatetraenoyl)-sn-glycero-3-phosphocholine + glycerol = 1-(5Z,8Z,11Z,14Z-eicosatetraenoyl)-glycerol + 1-octadecanoyl-sn-glycero-3-phosphocholine. It carries out the reaction 1-octadecanoyl-2-(9Z,12Z,15Z-octadecatrienoyl)-sn-glycero-3-phosphocholine + glycerol = 1-(9Z,12Z,15Z-octadecatrienoyl)-glycerol + 1-octadecanoyl-sn-glycero-3-phosphocholine. It participates in membrane lipid metabolism; glycerophospholipid metabolism. Its pathway is lipid metabolism; arachidonate metabolism. It functions in the pathway lipid metabolism; prostaglandin biosynthesis. The protein operates within lipid metabolism; leukotriene B4 biosynthesis. Its activity is regulated as follows. Activated by cytosolic calcium, which is necessary for binding to membrane lipids. Activated by phosphorylation in response to mitogenic stimuli. Its function is as follows. Has primarily calcium-dependent phospholipase and lysophospholipase activities, with a major role in membrane lipid remodeling and biosynthesis of lipid mediators of the inflammatory response. Plays an important role in embryo implantation and parturition through its ability to trigger prostanoid production. Preferentially hydrolyzes the ester bond of the fatty acyl group attached at sn-2 position of phospholipids (phospholipase A2 activity). Selectively hydrolyzes sn-2 arachidonoyl group from membrane phospholipids, providing the precursor for eicosanoid biosynthesis via the cyclooxygenase pathway. In an alternative pathway of eicosanoid biosynthesis, hydrolyzes sn-2 fatty acyl chain of eicosanoid lysophopholipids to release free bioactive eicosanoids. Hydrolyzes the ester bond of the fatty acyl group attached at sn-1 position of phospholipids (phospholipase A1 activity) only if an ether linkage rather than an ester linkage is present at the sn-2 position. This hydrolysis is not stereospecific. Has calcium-independent phospholipase A2 and lysophospholipase activities in the presence of phosphoinositides. Has O-acyltransferase activity. Catalyzes the transfer of fatty acyl chains from phospholipids to a primary hydroxyl group of glycerol (sn-1 or sn-3), potentially contributing to monoacylglycerol synthesis. This is Cytosolic phospholipase A2 (PLA2G4A) from Bos taurus (Bovine).